A 408-amino-acid polypeptide reads, in one-letter code: Histidine--tRNA ligase (408 aa).

It belongs to the class-II aminoacyl-tRNA synthetase family. As to quaternary structure, homodimer.

It localises to the cytoplasm. The enzyme catalyses tRNA(His) + L-histidine + ATP = L-histidyl-tRNA(His) + AMP + diphosphate + H(+). The sequence is that of Histidine--tRNA ligase from Campylobacter jejuni subsp. doylei (strain ATCC BAA-1458 / RM4099 / 269.97).